We begin with the raw amino-acid sequence, 150 residues long: Phosphoribosyl-AMP cyclohydrolase (150 aa).

A Mg(2+)-binding site is contributed by D93. Residue C94 coordinates Zn(2+). 2 residues coordinate Mg(2+): D95 and D97. Zn(2+) is bound by residues C112 and C119.

This sequence belongs to the PRA-CH family. As to quaternary structure, homodimer. Mg(2+) serves as cofactor. It depends on Zn(2+) as a cofactor.

The protein resides in the cytoplasm. The catalysed reaction is 1-(5-phospho-beta-D-ribosyl)-5'-AMP + H2O = 1-(5-phospho-beta-D-ribosyl)-5-[(5-phospho-beta-D-ribosylamino)methylideneamino]imidazole-4-carboxamide. Its pathway is amino-acid biosynthesis; L-histidine biosynthesis; L-histidine from 5-phospho-alpha-D-ribose 1-diphosphate: step 3/9. Its function is as follows. Catalyzes the hydrolysis of the adenine ring of phosphoribosyl-AMP. The polypeptide is Phosphoribosyl-AMP cyclohydrolase (Rhizobium etli (strain CIAT 652)).